Reading from the N-terminus, the 191-residue chain is Acireductone dioxygenase 2 (191 aa).

Positions 102, 104, 108, and 146 each coordinate Fe(2+). Ni(2+)-binding residues include H102, H104, E108, and H146.

Belongs to the acireductone dioxygenase (ARD) family. As to quaternary structure, monomer. Requires Fe(2+) as cofactor. Ni(2+) is required as a cofactor.

The catalysed reaction is 1,2-dihydroxy-5-(methylsulfanyl)pent-1-en-3-one + O2 = 3-(methylsulfanyl)propanoate + CO + formate + 2 H(+). It carries out the reaction 1,2-dihydroxy-5-(methylsulfanyl)pent-1-en-3-one + O2 = 4-methylsulfanyl-2-oxobutanoate + formate + 2 H(+). Its pathway is amino-acid biosynthesis; L-methionine biosynthesis via salvage pathway; L-methionine from S-methyl-5-thio-alpha-D-ribose 1-phosphate: step 5/6. Functionally, catalyzes 2 different reactions between oxygen and the acireductone 1,2-dihydroxy-3-keto-5-methylthiopentene (DHK-MTPene) depending upon the metal bound in the active site. Fe-containing acireductone dioxygenase (Fe-ARD) produces formate and 2-keto-4-methylthiobutyrate (KMTB), the alpha-ketoacid precursor of methionine in the methionine recycle pathway. Ni-containing acireductone dioxygenase (Ni-ARD) produces methylthiopropionate, carbon monoxide and formate, and does not lie on the methionine recycle pathway. The sequence is that of Acireductone dioxygenase 2 from Nocardia farcinica (strain IFM 10152).